The chain runs to 411 residues: Serine--tRNA ligase (411 aa).

226-228 (TSE) is a binding site for L-serine. An ATP-binding site is contributed by 257–259 (RKE). Glu-280 contacts L-serine. 344-347 (EISS) serves as a coordination point for ATP. Residue Ser-379 coordinates L-serine.

This sequence belongs to the class-II aminoacyl-tRNA synthetase family. Type-1 seryl-tRNA synthetase subfamily. As to quaternary structure, homodimer. The tRNA molecule binds across the dimer.

It localises to the cytoplasm. It catalyses the reaction tRNA(Ser) + L-serine + ATP = L-seryl-tRNA(Ser) + AMP + diphosphate + H(+). It carries out the reaction tRNA(Sec) + L-serine + ATP = L-seryl-tRNA(Sec) + AMP + diphosphate + H(+). It functions in the pathway aminoacyl-tRNA biosynthesis; selenocysteinyl-tRNA(Sec) biosynthesis; L-seryl-tRNA(Sec) from L-serine and tRNA(Sec): step 1/1. Catalyzes the attachment of serine to tRNA(Ser). Is also able to aminoacylate tRNA(Sec) with serine, to form the misacylated tRNA L-seryl-tRNA(Sec), which will be further converted into selenocysteinyl-tRNA(Sec). This Campylobacter jejuni subsp. jejuni serotype O:6 (strain 81116 / NCTC 11828) protein is Serine--tRNA ligase.